The primary structure comprises 449 residues: MNKITVDLNNTKPYIKDEEIKALEPFIKEAHKMLHEGSGLGNDFIGWLDLPINYDKDEFQRIKKASNKIKANSDILLVIGIGGSYLGARAAIEMLSHNFRSLLKKEDKEGTDIIFVGNSISSTYMAELLEVIKDRDFSINVISKSGTTTEPAIAFRIFKEILENKYGIEEAKNRIFVTTDKSKGALKTSSDKQGYETFVIPDNVGGRYSVLTAVGLLPISVAGINIDEMLKGAYDAREDFMYDNIEENQCYKYVAARNALYNKGKNTEILANFEPSLHYFGEWWKQLYGESEGKEGKGIFPASVSFSTDLHSMGQYIQEGLRIIFETFINIEKPRKDLEIKSEKENLDGLNFLSGKTVDFVNKQAFRGTVLAHNDGEVPCIVINVPEVSPYYFGYLVYFFEKACGISGYILGVNPFDQPGVEAYKKNMFALLGKEGFEDRKKELEKRMN.

Catalysis depends on glutamate 290, which acts as the Proton donor. Catalysis depends on residues histidine 311 and lysine 425.

Belongs to the GPI family.

Its subcellular location is the cytoplasm. The enzyme catalyses alpha-D-glucose 6-phosphate = beta-D-fructose 6-phosphate. The protein operates within carbohydrate biosynthesis; gluconeogenesis. Its pathway is carbohydrate degradation; glycolysis; D-glyceraldehyde 3-phosphate and glycerone phosphate from D-glucose: step 2/4. Catalyzes the reversible isomerization of glucose-6-phosphate to fructose-6-phosphate. This chain is Glucose-6-phosphate isomerase, found in Clostridium tetani (strain Massachusetts / E88).